The chain runs to 150 residues: SKP1-like protein 17 (150 aa).

The interval 92-150 (LDAADYLIVIGLKNLIAQAIADYTADKTVNEIRELFNIENDYTPEEEEELRKKNEWAFN) is interaction with the F-box domain of F-box proteins.

The protein belongs to the SKP1 family. Part of a SCF (SKP1-cullin-F-box) protein ligase complex. Interacts with CPR1/CPR30. As to expression, mainly detected in the siliques.

Its subcellular location is the nucleus. It functions in the pathway protein modification; protein ubiquitination. Involved in ubiquitination and subsequent proteasomal degradation of target proteins. Together with CUL1, RBX1 and a F-box protein, it forms a SCF E3 ubiquitin ligase complex. The functional specificity of this complex depends on the type of F-box protein. In the SCF complex, it serves as an adapter that links the F-box protein to CUL1. Probably implicated in incompatibility response after hybridization. This Arabidopsis thaliana (Mouse-ear cress) protein is SKP1-like protein 17 (ASK17).